The chain runs to 778 residues: MFIEHPLIKPKTLEARLYQQIIAANALKKKTLCVLSTGLGKTAIAILVIAGILTKKDGKVLILAPSRPLVEQHYNRLKQVLNIDEDKIIALTGKIQPKKRAELYKKGKIFIATPQVIENDIIAGRINVDEFILLIADEAHHTTGDHAYAFVAKKFKDKCHILGLTASPGSDIDKVMEICENLGIEHVEVRTEDDEDVKPYIAKVKLIPIRIDLPNEFKRALKLINEALKERLKILKDAGVINSIADVTKTELIELNNKLFSYDEEVKYELIKVCSEALKLMHAKELLESQGKSVFLNYINKLSMQRTKSAKSIVNDEKVREAVNLLMKSDVEHPKLGKVVDMVKNILEKNKDERIIIFAQYRDTVEKIVNLLTQNGIKAIRFIGQANKEGKGMSQKEQIEAIERFKKEGSVLVSTSVSEEGIDIPSVNYIIFYEPVPSEIRFIQRRGRAMRGEGGKVYVLIAKGTADEAYYRSALYKEREMKRLLKNMCYLLNKRLQKKFEEKSKEEIKEETEEIKEKEIESKTAVKEETKEEEEKTKKPVTILDFIKQIEVKERSKSEEDKIKQEIKIPKKPIKIIVDVREKNMAKLLHNYANIELKTLEVGDYVLSDRVVVERKTAEDFVNSIIDKRLFSQLKNLKKVEKPLLIVEGENFSRLHENALKGAILSIILDFGIPIIFTKNAEETADLLIKIAEKEQIKEKRTVMVRYGKTAMSLKEQQKFIVESLPDVGGALAERLLKHFKTVENVFTAKEEELMKVEGVGKERAKKIREVLTAEYEG.

Positions 22 to 186 (IAANALKKKT…EICENLGIEH (165 aa)) constitute a Helicase ATP-binding domain. 35-42 (LSTGLGKT) is a binding site for ATP. The DEAH box signature appears at 137 to 140 (DEAH). Residues 338–516 (KVVDMVKNIL…EIKEETEEIK (179 aa)) form the Helicase C-terminal domain.

It belongs to the DEAD box helicase family. DEAH subfamily.

The catalysed reaction is ATP + H2O = ADP + phosphate + H(+). This chain is Putative ATP-dependent RNA helicase MJ1505, found in Methanocaldococcus jannaschii (strain ATCC 43067 / DSM 2661 / JAL-1 / JCM 10045 / NBRC 100440) (Methanococcus jannaschii).